The sequence spans 198 residues: Nucleoid occlusion factor SlmA (198 aa).

An HTH tetR-type domain is found at 10–70 (NRREEILQSL…SLIEFIEDSL (61 aa)). A DNA-binding region (H-T-H motif) is located at residues 33 to 52 (TTAKLAASVGVSEAALYRHF). A coiled-coil region spans residues 117–144 (EQDRLQGRINQLFERIEAQLRQVLREKR).

Belongs to the nucleoid occlusion factor SlmA family. As to quaternary structure, homodimer. Interacts with FtsZ.

Its subcellular location is the cytoplasm. It is found in the nucleoid. Functionally, required for nucleoid occlusion (NO) phenomenon, which prevents Z-ring formation and cell division over the nucleoid. Acts as a DNA-associated cell division inhibitor that binds simultaneously chromosomal DNA and FtsZ, and disrupts the assembly of FtsZ polymers. SlmA-DNA-binding sequences (SBS) are dispersed on non-Ter regions of the chromosome, preventing FtsZ polymerization at these regions. In Escherichia coli O45:K1 (strain S88 / ExPEC), this protein is Nucleoid occlusion factor SlmA.